Consider the following 271-residue polypeptide: Extracellular metalloprotease ARB_05317 (271 aa).

A signal peptide spans 1–19 (MRFSVLLTGLAAAGSIATA). A glycan (N-linked (GlcNAc...) asparagine) is linked at asparagine 136. Histidine 185 is a Zn(2+) binding site. Residue glutamate 186 is part of the active site. Histidine 189 serves as a coordination point for Zn(2+). The N-linked (GlcNAc...) asparagine glycan is linked to asparagine 200. Cysteines 222 and 248 form a disulfide.

Belongs to the peptidase M43B family.

Its subcellular location is the secreted. Its function is as follows. Secreted metalloproteinase that allows assimilation of proteinaceous substrates. Plays a pivotal role as a pathogenicity determinant during infections and contributes to the ability of the pathogen to persist within the mammalian host. The sequence is that of Extracellular metalloprotease ARB_05317 from Arthroderma benhamiae (strain ATCC MYA-4681 / CBS 112371) (Trichophyton mentagrophytes).